A 148-amino-acid polypeptide reads, in one-letter code: Ribonuclease H (148 aa).

In terms of domain architecture, RNase H type-1 spans 1 to 141; that stretch reads MKTVEIYTDG…ADELANLGVK (141 aa). D9, E47, D69, and D133 together coordinate Mg(2+).

The protein belongs to the RNase H family. In terms of assembly, monomer. Mg(2+) is required as a cofactor.

It localises to the cytoplasm. The enzyme catalyses Endonucleolytic cleavage to 5'-phosphomonoester.. Its function is as follows. Endonuclease that specifically degrades the RNA of RNA-DNA hybrids. This chain is Ribonuclease H, found in Hahella chejuensis (strain KCTC 2396).